Reading from the N-terminus, the 451-residue chain is MTRKYFGTDGIRGQANSFPMTPEVAMKVGMAVGHIFRRKGQTSRVVIGKDTRRSGYMLENALVAGFTAAGMDVFLLGPIPTPAVAMLCRSLRADIGVMISASHNPFYDNGIKLFGPDGFKLSDEIELKIEAMIDGDLTPYLASHGDVGRAKRVDGDIYRYIEFAKRTLPRNIDLNGLRIVVDCANGAGYKVAPAALWELGAEVITINNEPNGININEDCGSTHPIGLMKKVHEVRADVGIALDGDADRVLLVDENGTVIDGDQLMAVIAESWAASDRLEGGGIVATVMSNLGLERFLADRHLTLARTKVGDRYVVEHMREHGFNVGGEQSGHIVLSDYATTGDGLISALQILAVAQEQGKPISEICRKFDPVPQLLKNVRTSGGKPLENKRVKSAIDEATERLGVQGRLVIRPSGTEPLIRVMAEGDDRGLVEKVVNDIIDVISSEGSAAA.

The Phosphoserine intermediate role is filled by serine 102. Residues serine 102, aspartate 243, aspartate 245, and aspartate 247 each contribute to the Mg(2+) site. Residue serine 102 is modified to Phosphoserine.

Belongs to the phosphohexose mutase family. It depends on Mg(2+) as a cofactor. Post-translationally, activated by phosphorylation.

The catalysed reaction is alpha-D-glucosamine 1-phosphate = D-glucosamine 6-phosphate. Functionally, catalyzes the conversion of glucosamine-6-phosphate to glucosamine-1-phosphate. The polypeptide is Phosphoglucosamine mutase (Brucella anthropi (strain ATCC 49188 / DSM 6882 / CCUG 24695 / JCM 21032 / LMG 3331 / NBRC 15819 / NCTC 12168 / Alc 37) (Ochrobactrum anthropi)).